Here is a 60-residue protein sequence, read N- to C-terminus: IIFVVGGPGSGKGTQCEKYGYTHLSTGDLLRVDSSNGFLIDGYPRQGEEFERKRLETYYK.

Residue 9 to 14 participates in ATP binding; the sequence is GSGKGT. Residue S25 is modified to Phosphoserine. The NMP stretch occupies residues 25–53; it reads STGDLLRVDSSNGFLIDGYPRQGEEFERK. AMP contacts are provided by T26 and R31.

This sequence belongs to the adenylate kinase family. AK1 subfamily. In terms of assembly, monomer. Requires Mg(2+) as cofactor.

The protein localises to the cytoplasm. The enzyme catalyses a ribonucleoside 5'-phosphate + ATP = a ribonucleoside 5'-diphosphate + ADP. The catalysed reaction is AMP + ATP = 2 ADP. It catalyses the reaction dAMP + ATP = dADP + ADP. It carries out the reaction dATP + AMP = dADP + ADP. The enzyme catalyses dAMP + dATP = 2 dADP. The catalysed reaction is a 2'-deoxyribonucleoside 5'-diphosphate + ATP = a 2'-deoxyribonucleoside 5'-triphosphate + ADP. It catalyses the reaction a ribonucleoside 5'-diphosphate + ATP = a ribonucleoside 5'-triphosphate + ADP. It carries out the reaction CDP + GTP = CTP + GDP. The enzyme catalyses GDP + ATP = GTP + ADP. The catalysed reaction is UDP + ATP = UTP + ADP. It catalyses the reaction GTP + UDP = UTP + GDP. It carries out the reaction dTDP + GTP = dTTP + GDP. The enzyme catalyses dCDP + GTP = dCTP + GDP. The catalysed reaction is dGDP + ATP = dGTP + ADP. It catalyses the reaction dADP + GTP = dATP + GDP. It carries out the reaction thiamine diphosphate + ADP = thiamine triphosphate + AMP. Its function is as follows. Catalyzes the reversible transfer of the terminal phosphate group between ATP and AMP. Also displays broad nucleoside diphosphate kinase activity. Plays an important role in cellular energy homeostasis and in adenine nucleotide metabolism. Also catalyzes at a very low rate the synthesis of thiamine triphosphate (ThTP) from thiamine diphosphate (ThDP) and ADP. The chain is Adenylate kinase isoenzyme 1 (Ak1) from Mesocricetus auratus (Golden hamster).